The chain runs to 194 residues: Phosphoheptose isomerase (194 aa).

The SIS domain occupies 37–194 (ISNSFKQGGK…LIEFEMAKQA (158 aa)). Residue 52-54 (NGG) coordinates substrate. Zn(2+) is bound by residues His-61 and Glu-65. Substrate-binding positions include Glu-65, 93 to 94 (ND), 119 to 121 (STS), Ser-124, and Gln-172. Zn(2+) contacts are provided by Gln-172 and His-180.

It belongs to the SIS family. GmhA subfamily. Homotetramer. Requires Zn(2+) as cofactor.

Its subcellular location is the cytoplasm. It catalyses the reaction 2 D-sedoheptulose 7-phosphate = D-glycero-alpha-D-manno-heptose 7-phosphate + D-glycero-beta-D-manno-heptose 7-phosphate. Its pathway is carbohydrate biosynthesis; D-glycero-D-manno-heptose 7-phosphate biosynthesis; D-glycero-alpha-D-manno-heptose 7-phosphate and D-glycero-beta-D-manno-heptose 7-phosphate from sedoheptulose 7-phosphate: step 1/1. In terms of biological role, catalyzes the isomerization of sedoheptulose 7-phosphate in D-glycero-D-manno-heptose 7-phosphate. The sequence is that of Phosphoheptose isomerase from Actinobacillus pleuropneumoniae serotype 5b (strain L20).